The primary structure comprises 436 residues: GTPase Der (436 aa).

EngA-type G domains are found at residues 4 to 167 and 175 to 351; these read PTVA…PTEV and IRFS…ESQN. GTP contacts are provided by residues 10–17, 57–61, 119–122, 181–188, 229–233, and 294–297; these read GRPNVGKS, DTGGI, NKVD, DTAGM, and NKWD. The region spanning 352–436 is the KH-like domain; the sequence is RRISSAVLND…PIHLIARKRK (85 aa).

Belongs to the TRAFAC class TrmE-Era-EngA-EngB-Septin-like GTPase superfamily. EngA (Der) GTPase family. As to quaternary structure, associates with the 50S ribosomal subunit.

Functionally, GTPase that plays an essential role in the late steps of ribosome biogenesis. The protein is GTPase Der of Streptococcus thermophilus (strain ATCC BAA-491 / LMD-9).